The primary structure comprises 291 residues: ATP synthase gamma chain (291 aa).

The protein belongs to the ATPase gamma chain family. F-type ATPases have 2 components, CF(1) - the catalytic core - and CF(0) - the membrane proton channel. CF(1) has five subunits: alpha(3), beta(3), gamma(1), delta(1), epsilon(1). CF(0) has three main subunits: a, b and c.

It localises to the cell inner membrane. Its function is as follows. Produces ATP from ADP in the presence of a proton gradient across the membrane. The gamma chain is believed to be important in regulating ATPase activity and the flow of protons through the CF(0) complex. This is ATP synthase gamma chain from Verminephrobacter eiseniae (strain EF01-2).